The following is a 66-amino-acid chain: MANTKDARVTIALECTSCIQRKTSGKSAGLCRYTTRKNRRNTPARLELEKYCFHCHKHTLHKESKK.

Belongs to the bacterial ribosomal protein bL33 family.

Its subcellular location is the plastid. The protein resides in the chloroplast. The chain is Large ribosomal subunit protein bL33c from Adiantum capillus-veneris (Maidenhair fern).